The chain runs to 690 residues: Long-chain fatty acid transport protein 5 (690 aa).

At 1 to 30 (MGVRQQLALLLLLLLLLWGLGQPVWPVAVA) the chain is on the cytoplasmic side. The next 2 helical transmembrane spans lie at 31 to 51 (LTLR…LAML) and 56 to 76 (LGPW…LTLL). The Cytoplasmic segment spans residues 77-690 (PARLPPGLRW…QAVCEGTWRL (614 aa)). An AMP-binding site is contributed by 292-303 (FIYTSGTTGLPK). Serine 501 carries the post-translational modification Phosphoserine.

It belongs to the ATP-dependent AMP-binding enzyme family. Predominantly expressed in liver.

The protein resides in the endoplasmic reticulum membrane. It is found in the microsome. The protein localises to the cell membrane. The catalysed reaction is a fatty acid(in) = a fatty acid(out). It catalyses the reaction cholate + ATP + CoA = choloyl-CoA + AMP + diphosphate. It carries out the reaction chenodeoxycholate + ATP + CoA = chenodeoxycholoyl-CoA + AMP + diphosphate. The enzyme catalyses deoxycholate + ATP + CoA = deoxycholoyl-CoA + AMP + diphosphate. The catalysed reaction is lithocholate + ATP + CoA = lithocholoyl-CoA + AMP + diphosphate. It catalyses the reaction (25R)-3alpha,7alpha,12alpha-trihydroxy-5beta-cholestan-26-oate + ATP + CoA = (25R)-3alpha,7alpha,12alpha-trihydroxy-5beta-cholestan-26-oyl-CoA + AMP + diphosphate. It carries out the reaction a very long-chain fatty acid + ATP + CoA = a very long-chain fatty acyl-CoA + AMP + diphosphate. The enzyme catalyses tetracosanoate + ATP + CoA = tetracosanoyl-CoA + AMP + diphosphate. The catalysed reaction is hexacosanoate + ATP + CoA = hexacosanoyl-CoA + AMP + diphosphate. It catalyses the reaction a long-chain fatty acid + ATP + CoA = a long-chain fatty acyl-CoA + AMP + diphosphate. It carries out the reaction octadecanoate + ATP + CoA = octadecanoyl-CoA + AMP + diphosphate. The enzyme catalyses eicosanoate + ATP + CoA = eicosanoyl-CoA + AMP + diphosphate. 3-alpha,7-alpha,12-alpha-trihydroxy-5-beta-cholestanate (THCA) inhibits the activation of cholate. Functionally, may mediate the import of long-chain fatty acids (LCFA) by facilitating their transport across cell membranes. Also catalyzes the ATP-dependent formation of fatty acyl-CoA using LCFA and very-long-chain fatty acids (VLCFA) as substrates. Mainly functions as a bile acyl-CoA synthetase catalyzing the activation of bile acids via ATP-dependent formation of bile acid CoA thioesters which is necessary for their subsequent conjugation with glycine or taurine. Both primary bile acids (cholic acid and chenodeoxycholic acid) and secondary bile acids (deoxycholic acid and lithocholic acid) are the principal substrates. In vitro, activates 3-alpha,7-alpha,12-alpha-trihydroxy-5-beta-cholestanate ((25R)-3alpha,7alpha,12alpha-trihydroxy-5beta-cholestan-26-oate or THCA), the C27 precursor of cholic acid deriving from the de novo synthesis from cholesterol. Plays an important role in hepatic fatty acid uptake and bile acid reconjugation and recycling but not in de novo synthesis of bile acids. In Homo sapiens (Human), this protein is Long-chain fatty acid transport protein 5 (SLC27A5).